Reading from the N-terminus, the 39-residue chain is Osmotin-like protein (39 aa).

It belongs to the thaumatin family. Post-translationally, contains intrachain disulfide bonds.

Its function is as follows. May be an important antifungal protein. The protein is Osmotin-like protein of Hevea brasiliensis (Para rubber tree).